The primary structure comprises 307 residues: Small ribosomal subunit biogenesis GTPase RsgA (307 aa).

The interval 1–20 is disordered; it reads MPSEHPFSDGISTPNPKETM. Over residues 10–20 the composition is skewed to polar residues; sequence GISTPNPKETM. The CP-type G domain maps to 85–242; it reads RQDAWKTKLI…LIDSPGLQEF (158 aa). GTP is bound by residues 135–138 and 184–192; these read NKAD and GQSGMGKST. C266, C271, H273, and C279 together coordinate Zn(2+).

This sequence belongs to the TRAFAC class YlqF/YawG GTPase family. RsgA subfamily. As to quaternary structure, monomer. Associates with 30S ribosomal subunit, binds 16S rRNA. The cofactor is Zn(2+).

Its subcellular location is the cytoplasm. In terms of biological role, one of several proteins that assist in the late maturation steps of the functional core of the 30S ribosomal subunit. Helps release RbfA from mature subunits. May play a role in the assembly of ribosomal proteins into the subunit. Circularly permuted GTPase that catalyzes slow GTP hydrolysis, GTPase activity is stimulated by the 30S ribosomal subunit. In Neisseria meningitidis serogroup A / serotype 4A (strain DSM 15465 / Z2491), this protein is Small ribosomal subunit biogenesis GTPase RsgA.